A 341-amino-acid polypeptide reads, in one-letter code: Serpentine receptor class beta-3 (341 aa).

The Extracellular segment spans residues 1-23 (MLETNDSVCELAYQLAYHPVYRS). Asn-5 carries an N-linked (GlcNAc...) asparagine glycan. A helical membrane pass occupies residues 24–44 (SQFWSMLVSSLSIPALIYFIT). Over 45-58 (RKIFFLHFHGNLKC) the chain is Cytoplasmic. Residues 59–79 (LLIVYFICNLLFSMALCFAFF) traverse the membrane as a helical segment. Residues 80–103 (YQFLIPFFVTSKCQLLINTTLFKW) are Extracellular-facing. A glycan (N-linked (GlcNAc...) asparagine) is linked at Asn-97. The chain crosses the membrane as a helical span at residues 104 to 124 (GQICSFLLLTSSMLLPIGFSI). At 125–141 (ERFVALGNAQKYESSRT) the chain is on the cytoplasmic side. The helical transmembrane segment at 142–162 (FLGPVIIFIIIAVDFSIIFSV) threads the bilayer. Residues 163-187 (YKNEPFTEGFYSFILVPSTTASQIN) lie on the Extracellular side of the membrane. The chain crosses the membrane as a helical span at residues 188 to 208 (MYFFVLLFVKIFNLLLNCILL). At 209–237 (RIHKKIRIKYYSLSVRYEMEEILQSSKFT) the chain is on the cytoplasmic side. The helical transmembrane segment at 238-258 (FIIRFTHLLFFGFYVVVILFV) threads the bilayer. Residues 259 to 276 (RIMGESFFNGTLNYSVAR) are Extracellular-facing. 2 N-linked (GlcNAc...) asparagine glycosylation sites follow: Asn-267 and Asn-271. Residues 277–297 (GVFCTVPTYNLIIVIIGIKSL) form a helical membrane-spanning segment. The Cytoplasmic portion of the chain corresponds to 298–341 (RHLNLQRLNKVQSTVQIKSTGKEGSKNYEDIITNYWDSVSSRTP).

Belongs to the nematode receptor-like protein srb family. In terms of tissue distribution, expressed throughout the head.

It localises to the cell membrane. The protein localises to the perikaryon. It is found in the cell projection. Its subcellular location is the dendrite. G-protein coupled receptor. This chain is Serpentine receptor class beta-3, found in Caenorhabditis elegans.